A 138-amino-acid chain; its full sequence is Large ribosomal subunit protein uL14 (138 aa).

The protein belongs to the universal ribosomal protein uL14 family. As to quaternary structure, part of the 50S ribosomal subunit. Forms a cluster with proteins L3 and L24e, part of which may contact the 16S rRNA in 2 intersubunit bridges.

Binds to 23S rRNA. Forms part of two intersubunit bridges in the 70S ribosome. This chain is Large ribosomal subunit protein uL14, found in Sulfurisphaera tokodaii (strain DSM 16993 / JCM 10545 / NBRC 100140 / 7) (Sulfolobus tokodaii).